Here is a 330-residue protein sequence, read N- to C-terminus: GTPase Obg (330 aa).

The Obg domain occupies Met-1–Leu-159. Residues Ser-160 to Lys-327 form the OBG-type G domain. GTP is bound by residues Gly-166 to Ser-173, Phe-191 to Val-195, Asp-212 to Gly-215, Asn-279 to Asp-282, and Ser-308 to Cys-310. Mg(2+) contacts are provided by Ser-173 and Thr-193.

This sequence belongs to the TRAFAC class OBG-HflX-like GTPase superfamily. OBG GTPase family. Monomer. Requires Mg(2+) as cofactor.

The protein localises to the cytoplasm. An essential GTPase which binds GTP, GDP and possibly (p)ppGpp with moderate affinity, with high nucleotide exchange rates and a fairly low GTP hydrolysis rate. Plays a role in control of the cell cycle, stress response, ribosome biogenesis and in those bacteria that undergo differentiation, in morphogenesis control. The protein is GTPase Obg of Rickettsia rickettsii (strain Iowa).